Here is a 159-residue protein sequence, read N- to C-terminus: Large ribosomal subunit protein uL10 (159 aa).

Belongs to the universal ribosomal protein uL10 family. In terms of assembly, part of the ribosomal stalk of the 50S ribosomal subunit. The N-terminus interacts with L11 and the large rRNA to form the base of the stalk. The C-terminus forms an elongated spine to which L12 dimers bind in a sequential fashion forming a multimeric L10(L12)X complex.

Functionally, forms part of the ribosomal stalk, playing a central role in the interaction of the ribosome with GTP-bound translation factors. The sequence is that of Large ribosomal subunit protein uL10 from Nautilia profundicola (strain ATCC BAA-1463 / DSM 18972 / AmH).